A 472-amino-acid polypeptide reads, in one-letter code: Putative F-box/LRR-repeat protein At5g54820 (472 aa).

Positions 6–54 (QDRLSSLPDILLIMIISFLPLKECVRTSVLSKRWRYLCLETTNLSFKES) constitute an F-box domain. 6 LRR repeats span residues 58–87 (NPDI…SITQ), 135–164 (NGDI…KIYG), 183–208 (IGWV…SIKN), 225–250 (VIEH…KYSG), 283–308 (SSRI…TVCP), and 338–363 (MHTK…GFDI).

This is Putative F-box/LRR-repeat protein At5g54820 from Arabidopsis thaliana (Mouse-ear cress).